Reading from the N-terminus, the 211-residue chain is Abscisic acid receptor PYL7 (211 aa).

The interval 29 to 180 (HHCRENQCTS…NLKSLACVSE (152 aa)) is START-like. Disulfide bonds link Cys-31–Cys-161 and Cys-36–Cys-161. Residues Lys-65, 93-98 (ATTSTE), 120-126 (RLKNYSS), and Glu-145 each bind abscisate. The short motif at 89–93 (SGLPA) is the Gate loop element. Residues 119-121 (HRL) carry the Latch loop motif.

It belongs to the PYR/PYL/RCAR abscisic acid intracellular receptor family. Homodimer. Binds ABA on one subunit only. Binds to CARs protein in an ABA-independent manner, both at the plasma membrane and in the nucleus. Interacts with ABI1, and possibly with other PP2Cs.

Its subcellular location is the cytoplasm. The protein localises to the nucleus. It is found in the cell membrane. Its function is as follows. Receptor for abscisic acid (ABA) required for ABA-mediated responses such as stomatal closure and germination inhibition. Inhibits the activity of group-A protein phosphatases type 2C (PP2Cs) when activated by ABA. This Arabidopsis thaliana (Mouse-ear cress) protein is Abscisic acid receptor PYL7 (PYL7).